Reading from the N-terminus, the 490-residue chain is NAD/NADP-dependent betaine aldehyde dehydrogenase (490 aa).

Positions 26, 27, and 93 each coordinate K(+). 150–153 is a binding site for NADPH; it reads GAWN. The active-site Charge relay system is the K162. 176 to 179 serves as a coordination point for NADPH; the sequence is KPSE. V180 contacts K(+). Residues G209 and 230–233 contribute to the NADPH site; that span reads GTST. L246 is a K(+) binding site. E252 serves as the catalytic Proton acceptor. Positions 286 and 387 each coordinate NADPH. The active-site Nucleophile is C286. C286 is subject to Cysteine sulfenic acid (-SOH). The K(+) site is built by K457 and G460. E464 functions as the Charge relay system in the catalytic mechanism.

This sequence belongs to the aldehyde dehydrogenase family. Dimer of dimers. K(+) serves as cofactor.

The enzyme catalyses betaine aldehyde + NAD(+) + H2O = glycine betaine + NADH + 2 H(+). The catalysed reaction is betaine aldehyde + NADP(+) + H2O = glycine betaine + NADPH + 2 H(+). It participates in amine and polyamine biosynthesis; betaine biosynthesis via choline pathway; betaine from betaine aldehyde: step 1/1. In terms of biological role, involved in the biosynthesis of the osmoprotectant glycine betaine. Catalyzes the irreversible oxidation of betaine aldehyde to the corresponding acid. In P.aeruginosa this reaction is a compulsory step in the assimilation of carbon and nitrogen when bacteria are growing in choline or choline precursors. Can use NADP(+) with similar efficiency to NAD(+), a property that can be used by the bacterium to produce the NADPH needed to combat the oxidative stress imposed by the host defenses. The chain is NAD/NADP-dependent betaine aldehyde dehydrogenase from Pseudomonas aeruginosa (strain ATCC 15692 / DSM 22644 / CIP 104116 / JCM 14847 / LMG 12228 / 1C / PRS 101 / PAO1).